Here is a 274-residue protein sequence, read N- to C-terminus: MAVRRALIVLAHAERTSFNYAMKEAAVEALKKKGWEVVESDLYAMNFNPLISRNDITGEPKDSENFQYPVESSLAYKEGRLSPDIVAEQKKLEAADLVIFQFPLYWFGVPAILKGWFERVLVAGFAYTYATMYDKGPFQNKKTLLSITTGGSGSMYSLQGVHGDMNVILWPIQSGILRFCGFQVLEPQLVYSIGHTPPDARVQVLEGWKKRLETVWEESPLYFAPSSLFDLNFQAGFLLKKEVQEEQKKNKFGLSVGHHLGKSIPADNQIKARK.

Ala2 bears the N-acetylalanine mark. FAD-binding positions include His12, 18-19 (FN), and Gln67. Phosphoserine is present on Ser82. 104-107 (LYWF) contributes to the FAD binding site. 126 to 128 (AYT) is a binding site for substrate. FAD contacts are provided by residues 148 to 151 (TTGG), Tyr156, and Arg201. An important for apoenzyme conformational stability region spans residues 225–274 (PSSLFDLNFQAGFLLKKEVQEEQKKNKFGLSVGHHLGKSIPADNQIKARK). Lys251 is covalently cross-linked (Glycyl lysine isopeptide (Lys-Gly) (interchain with G-Cter in SUMO2)).

Belongs to the NAD(P)H dehydrogenase (quinone) family. As to quaternary structure, homodimer. Interacts with PDLIM4 isoform 2; this interaction stabilizes PDLIM4 isoform 2 in response to oxidative stress and protects it from ubiquitin-independent degradation by the core 20S proteasome. Interacts with TP73 (via SAM domain); this interaction is NADH-dependent, stabilizes TP73 in response to oxidative stress and protects it from ubiquitin-independent degradation by the 20S proteasome. Interacts with TP53; this interaction is NADH-dependent, stabilizes TP53 in response to oxidative stress and protects it from ubiquitin-independent degradation by the 20S proteasome. Requires FAD as cofactor.

It localises to the cytoplasm. The protein localises to the cytosol. The catalysed reaction is a quinone + NADH + H(+) = a quinol + NAD(+). The enzyme catalyses a quinone + NADPH + H(+) = a quinol + NADP(+). It carries out the reaction ubiquinone-10 + NADH + H(+) = ubiquinol-10 + NAD(+). It catalyses the reaction menadione + NADH + H(+) = menadiol + NAD(+). In terms of biological role, flavin-containing quinone reductase that catalyzes two-electron reduction of quinones to hydroquinones using either NADH or NADPH as electron donors. In a ping-pong kinetic mechanism, the electrons are sequentially transferred from NAD(P)H to flavin cofactor and then from reduced flavin to the quinone, bypassing the formation of semiquinone and reactive oxygen species. Regulates cellular redox state primarily through quinone detoxification. Reduces components of plasma membrane redox system such as coenzyme Q and vitamin quinones, producing antioxidant hydroquinone forms. In the process may function as superoxide scavenger to prevent hydroquinone oxidation and facilitate excretion. Alternatively, can activate quinones and their derivatives by generating redox reactive hydroquinones with DNA cross-linking antitumor potential. Acts as a gatekeeper of the core 20S proteasome known to degrade proteins with unstructured regions. Upon oxidative stress, interacts with tumor suppressors TP53 and TP73 in a NADH-dependent way and inhibits their ubiquitin-independent degradation by the 20S proteasome. This is NAD(P)H dehydrogenase [quinone] 1 (Nqo1) from Rattus norvegicus (Rat).